The chain runs to 401 residues: Splicing factor 45 (401 aa).

At serine 2 the chain carries N-acetylserine. The residue at position 2 (serine 2) is a Phosphoserine. A Glycyl lysine isopeptide (Lys-Gly) (interchain with G-Cter in SUMO2) cross-link involves residue lysine 15. Lysine 21 is modified (N6-acetyllysine). Glycyl lysine isopeptide (Lys-Gly) (interchain with G-Cter in SUMO2) cross-links involve residues lysine 24 and lysine 33. Lysine 41 carries the N6-acetyllysine; alternate modification. Lysine 41 participates in a covalent cross-link: Glycyl lysine isopeptide (Lys-Gly) (interchain with G-Cter in SUMO2); alternate. Basic and acidic residues predominate over residues 57–68 (LKRGGSSDDRQI). Disordered stretches follow at residues 57-84 (LKRG…DPVP) and 114-233 (RQRE…FLAN). A Glycyl lysine isopeptide (Lys-Gly) (interchain with G-Cter in SUMO2) cross-link involves residue lysine 58. Threonine 71 carries the phosphothreonine modification. Residues 114–153 (RQREERQRQRELERQKEIEEREKRRKDRHEASGFARRPDP) show a composition bias toward basic and acidic residues. Residues serine 155 and serine 169 each carry the phosphoserine modification. Residues 182–200 (VEKDKELPRDFPYEEDSRP) are compositionally biased toward basic and acidic residues. The residue at position 222 (serine 222) is a Phosphoserine. The G-patch domain occupies 235 to 283 (GGTVAHKIMQKYGFREGQGLGKHEQGLSTALSVEKTSKRGGKIIVGDAT). Position 237 is a phosphothreonine (threonine 237). Lysine 256 participates in a covalent cross-link: Glycyl lysine isopeptide (Lys-Gly) (interchain with G-Cter in SUMO2). A Phosphoserine modification is found at serine 266. A Glycyl lysine isopeptide (Lys-Gly) (interchain with G-Cter in SUMO2) cross-link involves residue lysine 276. Phosphoserine occurs at positions 291 and 293. Residues 306 to 385 (VVLLRNMVGA…YFGGRVVKAC (80 aa)) form the RRM domain.

As to quaternary structure, binds SXL. Associates with the spliceosome. Interacts with SF3B1, SF1 and U2AF2.

The protein localises to the nucleus. Splice factor that binds to the single-stranded 3'AG at the exon/intron border and promotes its utilization in the second catalytic step. Involved in the regulation of alternative splicing and the utilization of cryptic splice sites. Promotes the utilization of a cryptic splice site created by the beta-110 mutation in the HBB gene. The resulting frameshift leads to sickle cell anemia. The polypeptide is Splicing factor 45 (RBM17) (Homo sapiens (Human)).